Consider the following 569-residue polypeptide: Nodulation protein U (569 aa).

The protein belongs to the NodU/CmcH family.

Functionally, involved in 6-O-carbamoylation of Nod-factors. The chain is Nodulation protein U (nodU) from Bradyrhizobium diazoefficiens (strain JCM 10833 / BCRC 13528 / IAM 13628 / NBRC 14792 / USDA 110).